The primary structure comprises 365 residues: Pre-mRNA-splicing factor srp2 (365 aa).

RRM domains follow at residues 6–69 (LFVG…RIVV) and 100–166 (LIVE…AVTL). The tract at residues 166–365 (LREDPDAANE…SAEGQVAAEW (200 aa)) is disordered. The span at 184-194 (FRSRSPPARRR) shows a compositional bias: basic residues. Phosphoserine is present on residues serine 186, serine 188, serine 276, serine 294, serine 296, serine 298, and serine 308. Residues 195-307 (YRDDYRRGGD…SPRRDREENR (113 aa)) show a composition bias toward basic and acidic residues. The span at 316-332 (SYSAAPEASMESSAPTE) shows a compositional bias: low complexity. Over residues 341–353 (EEQQPLQNHSDVG) the composition is skewed to polar residues.

The protein belongs to the splicing factor SR family. In terms of processing, extensively phosphorylated on serine residues in the RS domain.

It is found in the nucleus. Has a role in pre-mRNA splicing where it is involved in spliceosome assembly. The protein is Pre-mRNA-splicing factor srp2 (srp2) of Schizosaccharomyces pombe (strain 972 / ATCC 24843) (Fission yeast).